Reading from the N-terminus, the 341-residue chain is Anthranilate phosphoribosyltransferase (341 aa).

Residues Gly-81, 84-85 (GD), Ser-89, 91-94 (NIST), 109-117 (KHGNRSASS), and Ser-121 contribute to the 5-phospho-alpha-D-ribose 1-diphosphate site. An anthranilate-binding site is contributed by Gly-81. A Mg(2+)-binding site is contributed by Ser-93. Position 112 (Asn-112) interacts with anthranilate. Arg-167 contacts anthranilate. The Mg(2+) site is built by Asp-225 and Glu-226.

The protein belongs to the anthranilate phosphoribosyltransferase family. Homodimer. The cofactor is Mg(2+).

The catalysed reaction is N-(5-phospho-beta-D-ribosyl)anthranilate + diphosphate = 5-phospho-alpha-D-ribose 1-diphosphate + anthranilate. It functions in the pathway amino-acid biosynthesis; L-tryptophan biosynthesis; L-tryptophan from chorismate: step 2/5. Its function is as follows. Catalyzes the transfer of the phosphoribosyl group of 5-phosphorylribose-1-pyrophosphate (PRPP) to anthranilate to yield N-(5'-phosphoribosyl)-anthranilate (PRA). This Nocardioides sp. (strain ATCC BAA-499 / JS614) protein is Anthranilate phosphoribosyltransferase.